The sequence spans 837 residues: A disintegrin and metalloproteinase with thrombospondin motifs 4 (837 aa).

The first 51 residues, 1–51 (MSQTGSHPGRGLAGRWLWGAQPCLLLPIVPLSWLVWLLLLLLASLLPSARL), serve as a signal peptide directing secretion. A propeptide spanning residues 52 to 212 (ASPLPREEEI…PSPRPRRAKR (161 aa)) is cleaved from the precursor. N-linked (GlcNAc...) asparagine glycosylation occurs at asparagine 68. A Cysteine switch motif is present at residues 192–199 (PMCNVKAP). Zn(2+) is bound at residue cysteine 194. In terms of domain architecture, Peptidase M12B spans 218 to 428 (RFVETLVVAD…GYGHCLLDKP (211 aa)). Cystine bridges form between cysteine 293–cysteine 345, cysteine 322–cysteine 327, cysteine 339–cysteine 423, cysteine 377–cysteine 407, cysteine 449–cysteine 472, cysteine 460–cysteine 482, cysteine 467–cysteine 501, cysteine 495–cysteine 506, cysteine 532–cysteine 569, cysteine 536–cysteine 574, and cysteine 547–cysteine 559. Histidine 361 provides a ligand contact to Zn(2+). The active site involves glutamate 362. Residues histidine 365 and histidine 371 each coordinate Zn(2+). The 83-residue stretch at 437 to 519 (TFPGKDYDAD…DQLQDFNIPQ (83 aa)) folds into the Disintegrin domain. One can recognise a TSP type-1 domain in the interval 520-575 (AGGWGPWGPWGDCSRTCGGGVQFSSRDCTRPVPRNGGKYCEGRRTRFRSCNTEDCP). The interval 686 to 837 (SKQSGSFRKF…LRRRPWAGRK (152 aa)) is spacer.

In terms of assembly, interacts with SRPX2. The cofactor is Zn(2+). Post-translationally, the precursor is cleaved by a furin endopeptidase. Glycosylated. Can be O-fucosylated by POFUT2 on a serine or a threonine residue found within the consensus sequence C1-X(2)-(S/T)-C2-G of the TSP type-1 repeat domains where C1 and C2 are the first and second cysteine residue of the repeat, respectively. Fucosylated repeats can then be further glycosylated by the addition of a beta-1,3-glucose residue by the glucosyltransferase, B3GALTL. Fucosylation mediates the efficient secretion of ADAMTS family members. Can also be C-glycosylated with one or two mannose molecules on tryptophan residues within the consensus sequence W-X-X-W of the TPRs, and N-glycosylated. These other glycosylations can also facilitate secretion. As to expression, expressed in brain, lung and heart. Expressed at very low level in placenta and skeletal muscles. Isoform 2: Detected in osteoarthritic synovium.

Its subcellular location is the secreted. It localises to the extracellular space. The protein localises to the extracellular matrix. It catalyses the reaction Glutamyl endopeptidase. Bonds cleaved include 370-Thr-Glu-Gly-Glu-|-Ala-Arg-Gly-Ser-377 in the interglobular domain of mammalian aggrecan.. Functionally, cleaves aggrecan, a cartilage proteoglycan, at the '392-Glu-|-Ala-393' site and may be involved in its turnover. Also cleaves COMP. May play an important role in the destruction of aggrecan in arthritic diseases. Could be a critical factor in the exacerbation of neurodegeneration in Alzheimer disease. In Homo sapiens (Human), this protein is A disintegrin and metalloproteinase with thrombospondin motifs 4 (ADAMTS4).